The primary structure comprises 100 residues: NADH-quinone oxidoreductase subunit K (100 aa).

A run of 3 helical transmembrane segments spans residues 4 to 24 (LQHG…GLLI), 28 to 48 (LLFM…AFVV), and 60 to 80 (VMYI…LALL).

This sequence belongs to the complex I subunit 4L family. In terms of assembly, NDH-1 is composed of 13 different subunits. Subunits NuoA, H, J, K, L, M, N constitute the membrane sector of the complex.

It is found in the cell inner membrane. The enzyme catalyses a quinone + NADH + 5 H(+)(in) = a quinol + NAD(+) + 4 H(+)(out). NDH-1 shuttles electrons from NADH, via FMN and iron-sulfur (Fe-S) centers, to quinones in the respiratory chain. The immediate electron acceptor for the enzyme in this species is believed to be ubiquinone. Couples the redox reaction to proton translocation (for every two electrons transferred, four hydrogen ions are translocated across the cytoplasmic membrane), and thus conserves the redox energy in a proton gradient. The sequence is that of NADH-quinone oxidoreductase subunit K from Edwardsiella ictaluri (strain 93-146).